The chain runs to 171 residues: Shikimate kinase (171 aa).

14 to 19 (GAGKST) lines the ATP pocket. S18 serves as a coordination point for Mg(2+). 3 residues coordinate substrate: D36, R60, and G82. R120 is an ATP binding site. R139 lines the substrate pocket. ATP is bound at residue Q156.

The protein belongs to the shikimate kinase family. As to quaternary structure, monomer. Mg(2+) serves as cofactor.

The protein resides in the cytoplasm. It carries out the reaction shikimate + ATP = 3-phosphoshikimate + ADP + H(+). It participates in metabolic intermediate biosynthesis; chorismate biosynthesis; chorismate from D-erythrose 4-phosphate and phosphoenolpyruvate: step 5/7. In terms of biological role, catalyzes the specific phosphorylation of the 3-hydroxyl group of shikimic acid using ATP as a cosubstrate. In Pseudoalteromonas atlantica (strain T6c / ATCC BAA-1087), this protein is Shikimate kinase.